The following is a 483-amino-acid chain: Aspartyl/glutamyl-tRNA(Asn/Gln) amidotransferase subunit B (483 aa).

This sequence belongs to the GatB/GatE family. GatB subfamily. As to quaternary structure, heterotrimer of A, B and C subunits.

It carries out the reaction L-glutamyl-tRNA(Gln) + L-glutamine + ATP + H2O = L-glutaminyl-tRNA(Gln) + L-glutamate + ADP + phosphate + H(+). The enzyme catalyses L-aspartyl-tRNA(Asn) + L-glutamine + ATP + H2O = L-asparaginyl-tRNA(Asn) + L-glutamate + ADP + phosphate + 2 H(+). Allows the formation of correctly charged Asn-tRNA(Asn) or Gln-tRNA(Gln) through the transamidation of misacylated Asp-tRNA(Asn) or Glu-tRNA(Gln) in organisms which lack either or both of asparaginyl-tRNA or glutaminyl-tRNA synthetases. The reaction takes place in the presence of glutamine and ATP through an activated phospho-Asp-tRNA(Asn) or phospho-Glu-tRNA(Gln). This Rickettsia felis (strain ATCC VR-1525 / URRWXCal2) (Rickettsia azadi) protein is Aspartyl/glutamyl-tRNA(Asn/Gln) amidotransferase subunit B.